Consider the following 62-residue polypeptide: Large ribosomal subunit protein bL33 (62 aa).

This sequence belongs to the bacterial ribosomal protein bL33 family.

In Porphyromonas gingivalis (strain ATCC 33277 / DSM 20709 / CIP 103683 / JCM 12257 / NCTC 11834 / 2561), this protein is Large ribosomal subunit protein bL33.